Here is a 477-residue protein sequence, read N- to C-terminus: Delayed-rectifier potassium channel regulatory subunit KCNS2 (477 aa).

The Cytoplasmic portion of the chain corresponds to 1-184 (MTRQSLWDLS…LALDNPGYSV (184 aa)). The chain crosses the membrane as a helical span at residues 185–206 (LSRVFSVLSILVVLGSIITMCL). The Extracellular portion of the chain corresponds to 207 to 225 (NSLPDFQIPDSQGNPGEDP). The helical transmembrane segment at 226-248 (RFEIVEHFGIAWFTFELVARFAV) threads the bilayer. At 249-259 (APDFLKFFKNA) the chain is on the cytoplasmic side. A helical membrane pass occupies residues 260–280 (LNLIDLMSIVPFYITLVVNLV). Residues 281-290 (VESSPTLANL) are Extracellular-facing. Residues 291 to 311 (GRVAQVLRLMRIFRILKLARH) form a helical; Voltage-sensor membrane-spanning segment. The Cytoplasmic portion of the chain corresponds to 312–326 (STGLRSLGATLKYSY). A helical membrane pass occupies residues 327–348 (KEVGLLLLYLSVGISIFSVVAY). Residues 349-361 (TIEKEENEGLATI) lie on the Extracellular side of the membrane. The helical intramembrane region spans 362–373 (PACWWWATVSMT). The short motif at 374-379 (TVGYGD) is the Selectivity filter element. The stretch at 374 to 381 (TVGYGDVV) is an intramembrane region. The Extracellular portion of the chain corresponds to 382 to 388 (PGTTAGK). The helical transmembrane segment at 389 to 417 (LTASACILAGILVVVLPITLIFNKFSHFY) threads the bilayer. At 418-477 (RRQKQLESAMRSCDFGDGMKEVPSVNLRDYYAHKVKSLMASLTNMSRSSPSELSLDDSLH) the chain is on the cytoplasmic side.

The protein belongs to the potassium channel family. S (TC 1.A.1.2) subfamily. Kv9.2/KCNS2 sub-subfamily. In terms of assembly, heterotetramer with KCNB1 and KCNB2. Does not form homomultimers. In terms of tissue distribution, detected in brain, lung and in pulmonary arteries.

The protein resides in the cell membrane. Functionally, potassium channel regulatory subunit that modulate the delayed rectifier voltage-gated potassium channel activity of KCNB1 and KCNB2 by altering their kinetics, expression levels, and shifting the half-inactivation potential to more polarized values. While it does not form functional channels on its own, it can form functional heterotetrameric channels with KCNB1 and KCNB2. Each regulatory subunit has unique regulatory properties that can lead to extensive inhibition, significant changes in kinetics, and/or substantial shifts in the voltage dependencies of the inactivation process. The sequence is that of Delayed-rectifier potassium channel regulatory subunit KCNS2 from Rattus norvegicus (Rat).